A 441-amino-acid chain; its full sequence is Divalent metal cation transporter MntH (441 aa).

A run of 11 helical transmembrane segments spans residues 41-61, 74-94, 116-136, 141-161, 183-203, 223-243, 271-291, 311-331, 360-380, 381-401, and 419-439; these read TGIA…IGYM, AAYG…AMLF, HFPA…AMAT, FLGG…AGMI, AAIA…LMIA, AALT…TLYL, VVVA…MAAS, IPVL…TSGV, AVTI…TRAM, VASQ…LLIL, and IVAG…VWAA.

Belongs to the NRAMP family.

The protein localises to the cell inner membrane. In terms of biological role, h(+)-stimulated, divalent metal cation uptake system. The chain is Divalent metal cation transporter MntH from Burkholderia ambifaria (strain ATCC BAA-244 / DSM 16087 / CCUG 44356 / LMG 19182 / AMMD) (Burkholderia cepacia (strain AMMD)).